A 1931-amino-acid chain; its full sequence is Cytadherence high molecular weight protein 2 (1931 aa).

3 coiled-coil regions span residues 1626 to 1659 (KEHQ…LTES), 1768 to 1846 (FNTQ…IKTN), and 1903 to 1930 (HAKK…KQTS).

Its function is as follows. Component of the cytoskeleton-like structure which stabilizes the shape of the wall-less Mycoplasma. This cytoskeleton-like network of accessory proteins containing HMW proteins 1 to 5 allows the proper anchoring of cytadhesin proteins in the mycoplasmal membrane at the attachment organelle. The chain is Cytadherence high molecular weight protein 2 (hlp2) from Mycoplasmoides gallisepticum (strain R(low / passage 15 / clone 2)) (Mycoplasma gallisepticum).